A 185-amino-acid polypeptide reads, in one-letter code: Ribosome-recycling factor (185 aa).

The protein belongs to the RRF family.

It localises to the cytoplasm. Responsible for the release of ribosomes from messenger RNA at the termination of protein biosynthesis. May increase the efficiency of translation by recycling ribosomes from one round of translation to another. This Streptococcus thermophilus (strain ATCC BAA-491 / LMD-9) protein is Ribosome-recycling factor.